Consider the following 255-residue polypeptide: Indole-3-glycerol phosphate synthase (255 aa).

Belongs to the TrpC family.

The enzyme catalyses 1-(2-carboxyphenylamino)-1-deoxy-D-ribulose 5-phosphate + H(+) = (1S,2R)-1-C-(indol-3-yl)glycerol 3-phosphate + CO2 + H2O. It functions in the pathway amino-acid biosynthesis; L-tryptophan biosynthesis; L-tryptophan from chorismate: step 4/5. In Streptococcus thermophilus (strain CNRZ 1066), this protein is Indole-3-glycerol phosphate synthase.